The primary structure comprises 254 residues: Dihydroorotate dehydrogenase B (NAD(+)), electron transfer subunit (254 aa).

The FAD-binding FR-type domain maps to 1–99 (MLQTEMKVIQ…LGPLGKGFDI (99 aa)). FAD contacts are provided by residues 50 to 53 (RPIS), 67 to 69 (LYR), and 74 to 75 (GT). Positions 218, 223, 226, and 241 each coordinate [2Fe-2S] cluster.

This sequence belongs to the PyrK family. In terms of assembly, heterotetramer of 2 PyrK and 2 PyrD type B subunits. Requires [2Fe-2S] cluster as cofactor. It depends on FAD as a cofactor.

The protein operates within pyrimidine metabolism; UMP biosynthesis via de novo pathway; orotate from (S)-dihydroorotate (NAD(+) route): step 1/1. Responsible for channeling the electrons from the oxidation of dihydroorotate from the FMN redox center in the PyrD type B subunit to the ultimate electron acceptor NAD(+). The protein is Dihydroorotate dehydrogenase B (NAD(+)), electron transfer subunit of Listeria monocytogenes serotype 4b (strain F2365).